Reading from the N-terminus, the 224-residue chain is Lipoprotein-releasing system ATP-binding protein LolD (224 aa).

Positions 6 to 224 (VRLRELRRSF…VVRLHEGVLE (219 aa)) constitute an ABC transporter domain. 42-49 (GPSGSGKS) contacts ATP.

The protein belongs to the ABC transporter superfamily. Lipoprotein translocase (TC 3.A.1.125) family. In terms of assembly, the complex is composed of two ATP-binding proteins (LolD) and two transmembrane proteins (LolC and LolE).

It localises to the cell inner membrane. Functionally, part of the ABC transporter complex LolCDE involved in the translocation of mature outer membrane-directed lipoproteins, from the inner membrane to the periplasmic chaperone, LolA. Responsible for the formation of the LolA-lipoprotein complex in an ATP-dependent manner. In Novosphingobium aromaticivorans (strain ATCC 700278 / DSM 12444 / CCUG 56034 / CIP 105152 / NBRC 16084 / F199), this protein is Lipoprotein-releasing system ATP-binding protein LolD.